The following is a 404-amino-acid chain: 1-deoxy-D-xylulose 5-phosphate reductoisomerase (404 aa).

The NADPH site is built by T10, G11, S12, I13, G36, R37, N38, and N124. K125 serves as a coordination point for 1-deoxy-D-xylulose 5-phosphate. Residue E126 participates in NADPH binding. D150 lines the Mn(2+) pocket. 1-deoxy-D-xylulose 5-phosphate contacts are provided by S151, E152, S186, and H209. E152 serves as a coordination point for Mn(2+). Residue G215 coordinates NADPH. S222, N227, K228, and E231 together coordinate 1-deoxy-D-xylulose 5-phosphate. E231 is a binding site for Mn(2+).

The protein belongs to the DXR family. Homodimer. Mg(2+) is required as a cofactor. The cofactor is Mn(2+).

The enzyme catalyses 2-C-methyl-D-erythritol 4-phosphate + NADP(+) = 1-deoxy-D-xylulose 5-phosphate + NADPH + H(+). It participates in isoprenoid biosynthesis; isopentenyl diphosphate biosynthesis via DXP pathway; isopentenyl diphosphate from 1-deoxy-D-xylulose 5-phosphate: step 1/6. Its function is as follows. Catalyzes the NADPH-dependent rearrangement and reduction of 1-deoxy-D-xylulose-5-phosphate (DXP) to 2-C-methyl-D-erythritol 4-phosphate (MEP). In Erwinia tasmaniensis (strain DSM 17950 / CFBP 7177 / CIP 109463 / NCPPB 4357 / Et1/99), this protein is 1-deoxy-D-xylulose 5-phosphate reductoisomerase.